The primary structure comprises 461 residues: Asparagine--tRNA ligase (461 aa).

It belongs to the class-II aminoacyl-tRNA synthetase family. Homodimer.

It localises to the cytoplasm. It catalyses the reaction tRNA(Asn) + L-asparagine + ATP = L-asparaginyl-tRNA(Asn) + AMP + diphosphate + H(+). In Geotalea uraniireducens (strain Rf4) (Geobacter uraniireducens), this protein is Asparagine--tRNA ligase.